The primary structure comprises 77 residues: Large ribosomal subunit protein bL28 (77 aa).

The disordered stretch occupies residues 1-25 (MARVCQVTGKAPMSGNNVSHANNKT).

The protein belongs to the bacterial ribosomal protein bL28 family.

The protein is Large ribosomal subunit protein bL28 of Paraburkholderia phymatum (strain DSM 17167 / CIP 108236 / LMG 21445 / STM815) (Burkholderia phymatum).